The following is a 504-amino-acid chain: Pre-mRNA-processing factor 19 (504 aa).

At Ser2 the chain carries N-acetylserine. One can recognise a U-box domain in the interval Ser2 to Ala73. The interval Ala68–Gly223 is may mediate interaction with PSMC5. N6-acetyllysine occurs at positions 122, 179, 244, and 261. A WD 1 repeat occupies Ala219–Thr259. 6 WD repeats span residues Gly262–Val301, Ala304–Thr345, Thr348–Asn387, Gly390–Thr429, Asp433–Thr472, and Glu473–Ser503.

It belongs to the WD repeat PRP19 family. Homotetramer. Component of activated, catalytic and post-catalytic spliceosomes. Component of the Prp19 complex/PRP19C/Nineteen complex/NTC and related complexes described as PRP19-CDC5L splicing complex and PSO4 complex. A homotetramer of PRPF19, CDC5L, PLRG1 and BCAS2 constitute the core of those complexes. The interaction with CDC5L, PLRG1 and BCAS2 is direct within this core complex. At least three less stably associated proteins CTNNBL1, CWC15 and HSPA8 are found in the Prp19 complex. The Prp19 complex associates with the spliceosome during its assembly and remodeling recruiting additional proteins. Component of the XAB2 complex, a multimeric protein complex composed of XAB2, PRPF19, AQR, ZNF830, ISY1, and PPIE. Interacts with CWC22 and EIF4A3 in an RNA-independent manner. Interacts with RPA1 and RPA2; the PRP19-CDC5L complex is recruited to the sites of DNA repair where it interacts with the replication protein A complex (RPA). Interacts with SETMAR; required for SETMAR recruitment to site of DNA damage. Interacts with U2AF2; the interaction is direct and recruits the Prp19 complex to RNA polymerase II C-terminal domain (CTD) and the pre-mRNA. Interacts with PRPF3. Interacts with APEX1, DNTT and PSMB4. Interacts with PSMC5. Interacts with KNSTRN. Interacts (via N-terminus) with CDC5L. Interacts with KHDC4. Interacts with USB1. Interacts with DDX41.

The protein localises to the nucleus. The protein resides in the nucleoplasm. It localises to the cytoplasm. It is found in the cytoskeleton. Its subcellular location is the spindle. The protein localises to the lipid droplet. The enzyme catalyses S-ubiquitinyl-[E2 ubiquitin-conjugating enzyme]-L-cysteine + [acceptor protein]-L-lysine = [E2 ubiquitin-conjugating enzyme]-L-cysteine + N(6)-ubiquitinyl-[acceptor protein]-L-lysine.. It functions in the pathway protein modification; protein ubiquitination. In terms of biological role, ubiquitin-protein ligase which is a core component of several complexes mainly involved pre-mRNA splicing and DNA repair. Required for pre-mRNA splicing as component of the spliceosome. Core component of the PRP19C/Prp19 complex/NTC/Nineteen complex which is part of the spliceosome and participates in its assembly, its remodeling and is required for its activity. During assembly of the spliceosome, mediates 'Lys-63'-linked polyubiquitination of the U4 spliceosomal protein PRPF3. Ubiquitination of PRPF3 allows its recognition by the U5 component PRPF8 and stabilizes the U4/U5/U6 tri-snRNP spliceosomal complex. Recruited to RNA polymerase II C-terminal domain (CTD) and the pre-mRNA, it may also couple the transcriptional and spliceosomal machineries. The XAB2 complex, which contains PRPF19, is also involved in pre-mRNA splicing, transcription and transcription-coupled repair. Beside its role in pre-mRNA splicing PRPF19, as part of the PRP19-CDC5L complex, plays a role in the DNA damage response/DDR. It is recruited to the sites of DNA damage by the RPA complex where PRPF19 directly ubiquitinates RPA1 and RPA2. 'Lys-63'-linked polyubiquitination of the RPA complex allows the recruitment of the ATR-ATRIP complex and the activation of ATR, a master regulator of the DNA damage response. May also play a role in DNA double-strand break (DSB) repair by recruiting the repair factor SETMAR to altered DNA. As part of the PSO4 complex may also be involved in the DNA interstrand cross-links/ICLs repair process. In addition, may also mediate 'Lys-48'-linked polyubiquitination of substrates and play a role in proteasomal degradation. May play a role in the biogenesis of lipid droplets. May play a role in neural differentiation possibly through its function as part of the spliceosome. The protein is Pre-mRNA-processing factor 19 (PRPF19) of Bos taurus (Bovine).